We begin with the raw amino-acid sequence, 429 residues long: Adenylosuccinate synthetase (429 aa).

Residues 12–18 and 40–42 contribute to the GTP site; these read GDEGKGK and GHT. D13 functions as the Proton acceptor in the catalytic mechanism. Mg(2+)-binding residues include D13 and G40. Residues 13–16, 38–41, T128, R142, Q223, T238, and R302 each bind IMP; these read DEGK and NAGH. The active-site Proton donor is the H41. 298–304 is a substrate binding site; it reads VNTGRKR. Residues R304, 330-332, and 412-414 contribute to the GTP site; these read KLD and GVG.

Belongs to the adenylosuccinate synthetase family. As to quaternary structure, homodimer. Requires Mg(2+) as cofactor.

It localises to the cytoplasm. The catalysed reaction is IMP + L-aspartate + GTP = N(6)-(1,2-dicarboxyethyl)-AMP + GDP + phosphate + 2 H(+). It participates in purine metabolism; AMP biosynthesis via de novo pathway; AMP from IMP: step 1/2. In terms of biological role, plays an important role in the de novo pathway of purine nucleotide biosynthesis. Catalyzes the first committed step in the biosynthesis of AMP from IMP. The chain is Adenylosuccinate synthetase from Corynebacterium efficiens (strain DSM 44549 / YS-314 / AJ 12310 / JCM 11189 / NBRC 100395).